Consider the following 605-residue polypeptide: Ubiquitin carboxyl-terminal hydrolase 2 (605 aa).

Positions Met1–Glu200 are necessary for interaction with MDM4. 2 disordered regions span residues Leu71–Leu107 and Trp237–Gln264. Residues Lys90–Glu100 are compositionally biased toward basic and acidic residues. Positions Pro245 to Arg255 are enriched in low complexity. Positions Ala267–Ala599 constitute a USP domain. Residue Cys276 is the Nucleophile of the active site. Residues Tyr403–Lys503 are necessary for interaction with MDM4. The Zn(2+) site is built by Cys425, Cys428, Cys476, and Cys479. His557 (proton acceptor) is an active-site residue.

It belongs to the peptidase C19 family. USP2 subfamily. In terms of assembly, homooligomer. Found in trimeric complex with MDM2 and MDM4 and USP2. Interacts with CCND1; the interaction is direct and promotes its stabilization by antagonizing ubiquitin-dependent degradation. Interacts (via N-terminus and C-terminus) with MDM2. Interacts with MDM4. Interacts with PER1. Interacts with KCNQ1; counteracts the NEDD4L-specific down-regulation of I(Ks) and restore plasma membrane localization of KCNQ1. Isoform 4: Interacts with NHERF4 and CLTC. As to expression, expressed in mesangial cells of the kidney and in different types of glomerulonephritides (at protein level).

It localises to the cytoplasm. The protein localises to the perinuclear region. The protein resides in the nucleus. It is found in the membrane. It carries out the reaction Thiol-dependent hydrolysis of ester, thioester, amide, peptide and isopeptide bonds formed by the C-terminal Gly of ubiquitin (a 76-residue protein attached to proteins as an intracellular targeting signal).. With respect to regulation, cleavage is inhibited by ubiquitin in a dosage-dependent manner. Cleavage is blocked by ubiquitin aldehyde. Its function is as follows. Hydrolase that deubiquitinates polyubiquitinated target proteins such as MDM2, MDM4 and CCND1. Isoform 1 and isoform 4 possess both ubiquitin-specific peptidase and isopeptidase activities. Deubiquitinates MDM2 without reversing MDM2-mediated p53/TP53 ubiquitination and thus indirectly promotes p53/TP53 degradation and limits p53 activity. Has no deubiquitinase activity against p53/TP53. Prevents MDM2-mediated degradation of MDM4. Plays a role in the G1/S cell-cycle progression in normal and cancer cells. Regulates the circadian clock by modulating its intrinsic circadian rhythm and its capacity to respond to external cues. Associates with clock proteins and deubiquitinates core clock component PER1 but does not affect its overall stability. Regulates the nucleocytoplasmic shuttling and nuclear retention of PER1 and its repressive role on the clock transcription factors CLOCK and BMAL1. Plays a role in the regulation of myogenic differentiation of embryonic muscle cells. Functionally, circadian clock output effector that regulates Ca(2+) absorption in the small intestine. Probably functions by regulating protein levels of the membrane scaffold protein NHERF4 in a rhythmic manner, and is therefore likely to control Ca(2+) membrane permeability mediated by the Ca(2+) channel TRPV6 in the intestine. This Homo sapiens (Human) protein is Ubiquitin carboxyl-terminal hydrolase 2 (USP2).